The primary structure comprises 1066 residues: Cytoplasmic dynein 2 intermediate chain 1 (1066 aa).

2 disordered regions span residues 22–366 (LWAI…ENAR) and 381–408 (YEDD…LEEL). Residue Ser30 is modified to Phosphoserine. 5 stretches are compositionally biased toward basic and acidic residues: residues 30-135 (SKEE…EELR), 147-171 (ETRD…RSEE), 180-256 (DEDR…EERH), 264-308 (GFHF…KRDG), and 316-336 (NLVR…HEEG). Ser247 carries the post-translational modification Phosphoserine. Composition is skewed to acidic residues over residues 351–362 (ETVEIEKEETDL) and 381–397 (YEDD…ESSN). Basic and acidic residues predominate over residues 399 to 408 (PESREKLEEL). Positions 473–552 (ASHRQKSRTQ…DIQTEEIETR (80 aa)) are binding to the DYNLT2B-DYNLT1/DYNLT3 dimer. WD repeat units follow at residues 694-734 (ICES…RLHY), 775-821 (VHKK…KADI), 907-947 (IRPV…PLLQ), and 952-992 (TDSH…LGPV).

The protein belongs to the dynein light intermediate chain family. Intermediate chain of the cytoplasmic dynein complex 2, a multisubunit complex, composed at least of eleven different proteins. The cytoplasmic dynein 2 complex consists of two catalytic heavy chains (HCs) and a number of non-catalytic subunits presented by intermediate chains (ICs), light intermediate chains (LICs) and light chains (LCs). Among them, a heavy chain (DYNC2H1), two intermediate chains (DYNC2I2 and DYNC2I1), a light intermediate chain (DYNC2LI1), and a light chain (DYNLT2B) are unique to the cytoplasmic dynein complex 2, but a subset of the light chains are also shared by dynein-1 and dynein-2 complexes. Interacts with DYNC2I2; their C-terminal domains each bind a copy of the heavy chain, and their extended N-terminal regions are held together by an array of light chain dimers. Interacts with DYNLT2B. Interacts (via the N-terminal half) with DYNLT2B-DYNLT1 dimer or with DYNLT2B-DYNLT3 dimer; this interaction is crucial for retrograde trafficking of ciliary proteins. Expressed in chondrocytes (at protein level).

The protein localises to the cell projection. It is found in the cilium. Its subcellular location is the cytoplasm. The protein resides in the cytoskeleton. It localises to the microtubule organizing center. The protein localises to the centrosome. Functionally, acts as one of several non-catalytic accessory components of the cytoplasmic dynein 2 complex (dynein-2 complex), a motor protein complex that drives the movement of cargos along microtubules within cilia and flagella in concert with the intraflagellar transport (IFT) system. DYNC2I1 plays a major role in retrograde ciliary protein trafficking in cilia and flagella. Also requires to maintain a functional transition zone. This Homo sapiens (Human) protein is Cytoplasmic dynein 2 intermediate chain 1.